Consider the following 387-residue polypeptide: G-protein coupled receptor homolog R33 (387 aa).

Residues 1-33 lie on the Extracellular side of the membrane; sequence MDVLLGTEELEDELHQLHFNYTCVPSLGLSVAR. Asparagine 20 carries N-linked (GlcNAc...) asparagine; by host glycosylation. Residues 34–61 traverse the membrane as a helical segment; sequence DAETAVNFLIVLVGGPMNFLVLATQMLS. Residues 62–71 are Cytoplasmic-facing; that stretch reads NRSYSVSTPT. Residues 72-94 form a helical membrane-spanning segment; that stretch reads LYMTNLYLANLLTVATLPFLMLS. Residues 95-107 are Extracellular-facing; that stretch reads NRGLVGSSPEGCK. Residues 108 to 129 traverse the membrane as a helical segment; sequence IAALAYYATCTAGFATLMLIAI. Topologically, residues 130-150 are cytoplasmic; it reads NRYRVIHQRTRSGAGSKRQTY. A helical membrane pass occupies residues 151–169; the sequence is AVLAVTWLASLMCASPAPL. The Extracellular segment spans residues 170 to 204; that stretch reads YATVMAHDSADALAFETCIIYFSYDQVKTVLATFK. The helical transmembrane segment at 205–224 threads the bilayer; sequence ILITMIWGITPVVMMSWFYV. At 225-244 the chain is on the cytoplasmic side; it reads FFYRRLKLTSYRRRSQTLTF. The chain crosses the membrane as a helical span at residues 245–268; sequence VTTLMLSFLVVQTPFVAIMSYDSY. The Extracellular segment spans residues 269–285; that stretch reads GVLNWPINCDTINKRDA. The helical transmembrane segment at 286 to 309 threads the bilayer; that stretch reads VSMLARVVPNFHCLLNPVLYAFLG. The Cytoplasmic segment spans residues 310–387; the sequence is RDFNKRFILC…PPPPPPPPNC (78 aa). The interval 368-387 is disordered; the sequence is RLRALGRPPPPPPPPPPPNC. Pro residues predominate over residues 374–387; sequence RPPPPPPPPPPPNC.

Belongs to the G-protein coupled receptor 1 family.

It localises to the host cell membrane. Functionally, plays an important role in vivo, in particular in the dissemination to or replication in the salivary gland. The sequence is that of G-protein coupled receptor homolog R33 from Rattus.